A 210-amino-acid chain; its full sequence is Cytochrome c4 (210 aa).

The N-terminal stretch at methionine 1–alanine 20 is a signal peptide. Residues cysteine 34, cysteine 37, histidine 38, methionine 86, cysteine 139, cysteine 142, histidine 143, and methionine 187 each contribute to the heme c site.

Binds 2 heme c groups covalently per subunit.

It localises to the periplasm. Its function is as follows. Diheme, high potential cytochrome c believed to be an intermediate electron donor to terminal oxidation systems. This is Cytochrome c4 (cycA) from Azotobacter vinelandii.